A 1040-amino-acid chain; its full sequence is Multidrug resistance protein MdtB (1040 aa).

12 consecutive transmembrane segments (helical) span residues 25–45 (LLMA…PVAA), 347–367 (LMLA…NIPA), 369–389 (IIPG…MVFL), 396–416 (LTLM…IVVI), 440–460 (IGFT…PLLF), 472–492 (FAVT…TLTP), 537–557 (WLTL…WIVI), 863–883 (LGST…VLGV), 888–908 (FIHP…ALLA), 910–930 (IIAG…LIGI), 968–988 (ILMT…STGV), and 998–1018 (IAMV…TPVI).

Belongs to the resistance-nodulation-cell division (RND) (TC 2.A.6) family. MdtB subfamily. Part of a tripartite efflux system composed of MdtA, MdtB and MdtC. MdtB forms a heteromultimer with MdtC.

It localises to the cell inner membrane. This chain is Multidrug resistance protein MdtB, found in Salmonella gallinarum (strain 287/91 / NCTC 13346).